We begin with the raw amino-acid sequence, 273 residues long: Exosporium protein C (273 aa).

It localises to the spore wall. In Clostridium sporogenes (strain ATCC 15579), this protein is Exosporium protein C.